An 88-amino-acid polypeptide reads, in one-letter code: DNA-directed RNA polymerase subunit omega (88 aa).

This sequence belongs to the RNA polymerase subunit omega family. The RNAP catalytic core consists of 2 alpha, 1 beta, 1 beta' and 1 omega subunit. When a sigma factor is associated with the core the holoenzyme is formed, which can initiate transcription.

The enzyme catalyses RNA(n) + a ribonucleoside 5'-triphosphate = RNA(n+1) + diphosphate. Its function is as follows. Promotes RNA polymerase assembly. Latches the N- and C-terminal regions of the beta' subunit thereby facilitating its interaction with the beta and alpha subunits. The sequence is that of DNA-directed RNA polymerase subunit omega from Actinobacillus succinogenes (strain ATCC 55618 / DSM 22257 / CCUG 43843 / 130Z).